The following is a 95-amino-acid chain: DNA-directed RNA polymerase subunit Rpo11 (95 aa).

This sequence belongs to the archaeal Rpo11/eukaryotic RPB11/RPC19 RNA polymerase subunit family. As to quaternary structure, part of the RNA polymerase complex.

It localises to the cytoplasm. The enzyme catalyses RNA(n) + a ribonucleoside 5'-triphosphate = RNA(n+1) + diphosphate. Its function is as follows. DNA-dependent RNA polymerase (RNAP) catalyzes the transcription of DNA into RNA using the four ribonucleoside triphosphates as substrates. In Methanococcus vannielii (strain ATCC 35089 / DSM 1224 / JCM 13029 / OCM 148 / SB), this protein is DNA-directed RNA polymerase subunit Rpo11.